Consider the following 376-residue polypeptide: uncharacterized protein (376 aa).

A signal peptide spans Met1–Thr28. A lipid anchor (N-palmitoyl cysteine) is attached at Cys29. Cys29 carries the S-diacylglycerol cysteine lipid modification.

Belongs to the TP013X lipoprotein family.

The protein localises to the cell membrane. This is an uncharacterized protein from Treponema pallidum (strain Nichols).